The following is a 227-amino-acid chain: PKHD-type hydroxylase NE2125 (227 aa).

The 102-residue stretch at 78–179 (KIVPPFFNRY…RLACFMFIQS (102 aa)) folds into the Fe2OG dioxygenase domain. 3 residues coordinate Fe cation: His97, Asp99, and His160. Arg170 is a binding site for 2-oxoglutarate.

Requires Fe(2+) as cofactor. L-ascorbate serves as cofactor.

This is PKHD-type hydroxylase NE2125 from Nitrosomonas europaea (strain ATCC 19718 / CIP 103999 / KCTC 2705 / NBRC 14298).